Reading from the N-terminus, the 369-residue chain is MYQTVRPLLFRLDAEDAHHLTLRGLELASGVPLLPRLARTLTVPGTQGPGDAALRRTLWGQTPSEQTFESPLGLAAGLDKNAQAVPAFTAFGFGFVEVGTVTPLAQSGNERPRLFRLPEDEALINRMGFNNGGTAAMHARLAVLTDRAAPVWVNIGKNKVTPNEDAAEDYRKCVRALGDLADAFVVNVSSPNTPGLRALQAADDLAALVRAVLDEVEAGRVRTLRRPPVLVKLAPDLHPADFEASVGAVLDAGASGLIISNTTLSRGGLSHPNREQAGGLSGRPLTDRSTELVRDAYRLTRGQVPIVGVGGVFSAEDAYAKLLAGADLVEVYSALIYRGPGLVREINAGLVKLLERDGVRNIADVVGQG.

Residues 76-80 (AGLDK) and threonine 100 contribute to the FMN site. Position 80 (lysine 80) interacts with substrate. 125-129 (NRMGF) provides a ligand contact to substrate. FMN-binding residues include asparagine 154 and asparagine 187. Asparagine 187 serves as a coordination point for substrate. Serine 190 functions as the Nucleophile in the catalytic mechanism. Position 192 (asparagine 192) interacts with substrate. Positions 232 and 260 each coordinate FMN. 261–262 (NT) is a substrate binding site. FMN is bound by residues glycine 282, glycine 311, and 332–333 (YS).

The protein belongs to the dihydroorotate dehydrogenase family. Type 2 subfamily. As to quaternary structure, monomer. FMN is required as a cofactor.

It is found in the cell membrane. It catalyses the reaction (S)-dihydroorotate + a quinone = orotate + a quinol. It participates in pyrimidine metabolism; UMP biosynthesis via de novo pathway; orotate from (S)-dihydroorotate (quinone route): step 1/1. Catalyzes the conversion of dihydroorotate to orotate with quinone as electron acceptor. The protein is Dihydroorotate dehydrogenase (quinone) (pyrD) of Deinococcus radiodurans (strain ATCC 13939 / DSM 20539 / JCM 16871 / CCUG 27074 / LMG 4051 / NBRC 15346 / NCIMB 9279 / VKM B-1422 / R1).